The chain runs to 144 residues: SVVKSEDYTLQSYVDRRDYPLPDVAHVRHLSASQKALKEKEKASWSSLSMDEKVELYRIQFKESFAEMNRGSNEWKTVVGAAMFFIGFTAILIMLEKRYVYGPLPHTFDKEWVAMQTKRMLDLKVNPVDGLASKWDYEKKEWKK.

The Mitochondrial matrix segment spans residues 1 to 73; it reads SVVKSEDYTL…SFAEMNRGSN (73 aa). K4 is subject to N6-acetyllysine; alternate. At K4 the chain carries N6-succinyllysine; alternate. Phosphoserine occurs at positions 31 and 33. Position 35 is an N6-acetyllysine; alternate (K35). K35 is subject to N6-succinyllysine; alternate. N6-acetyllysine is present on K42. A helical transmembrane segment spans residues 74–99; that stretch reads EWKTVVGAAMFFIGFTAILIMLEKRY. Residues 100–144 lie on the Mitochondrial intermembrane side of the membrane; it reads VYGPLPHTFDKEWVAMQTKRMLDLKVNPVDGLASKWDYEKKEWKK.

This sequence belongs to the cytochrome c oxidase IV family. Component of the cytochrome c oxidase (complex IV, CIV), a multisubunit enzyme composed of 14 subunits. The complex is composed of a catalytic core of 3 subunits MT-CO1, MT-CO2 and MT-CO3, encoded in the mitochondrial DNA, and 11 supernumerary subunits COX4I, COX5A, COX5B, COX6A, COX6B, COX6C, COX7A, COX7B, COX7C, COX8 and NDUFA4, which are encoded in the nuclear genome. The complex exists as a monomer or a dimer and forms supercomplexes (SCs) in the inner mitochondrial membrane with NADH-ubiquinone oxidoreductase (complex I, CI) and ubiquinol-cytochrome c oxidoreductase (cytochrome b-c1 complex, complex III, CIII), resulting in different assemblies (supercomplex SCI(1)III(2)IV(1) and megacomplex MCI(2)III(2)IV(2)). Interacts with PHB2; the interaction decreases in absence of SPHK2. Interacts with AFG1L. Interacts with ABCB7; this interaction allows the regulation of cellular iron homeostasis and cellular reactive oxygen species (ROS) levels in cardiomyocytes. Interacts with FLVCR2; this interaction occurs in the absence of heme and is disrupted upon heme binding. Interacts with IRGC.

The protein localises to the mitochondrion inner membrane. It participates in energy metabolism; oxidative phosphorylation. Its function is as follows. Component of the cytochrome c oxidase, the last enzyme in the mitochondrial electron transport chain which drives oxidative phosphorylation. The respiratory chain contains 3 multisubunit complexes succinate dehydrogenase (complex II, CII), ubiquinol-cytochrome c oxidoreductase (cytochrome b-c1 complex, complex III, CIII) and cytochrome c oxidase (complex IV, CIV), that cooperate to transfer electrons derived from NADH and succinate to molecular oxygen, creating an electrochemical gradient over the inner membrane that drives transmembrane transport and the ATP synthase. Cytochrome c oxidase is the component of the respiratory chain that catalyzes the reduction of oxygen to water. Electrons originating from reduced cytochrome c in the intermembrane space (IMS) are transferred via the dinuclear copper A center (CU(A)) of subunit 2 and heme A of subunit 1 to the active site in subunit 1, a binuclear center (BNC) formed by heme A3 and copper B (CU(B)). The BNC reduces molecular oxygen to 2 water molecules using 4 electrons from cytochrome c in the IMS and 4 protons from the mitochondrial matrix. The chain is Cytochrome c oxidase subunit 4 isoform 1, mitochondrial (COX4I1) from Pithecia pithecia (White-faced saki).